The following is a 354-amino-acid chain: Uroporphyrinogen decarboxylase (354 aa).

Residues 30 to 34, Asp79, Tyr154, Ser209, and His333 contribute to the substrate site; that span reads RQAGR.

This sequence belongs to the uroporphyrinogen decarboxylase family. In terms of assembly, homodimer.

Its subcellular location is the cytoplasm. The catalysed reaction is uroporphyrinogen III + 4 H(+) = coproporphyrinogen III + 4 CO2. Its pathway is porphyrin-containing compound metabolism; protoporphyrin-IX biosynthesis; coproporphyrinogen-III from 5-aminolevulinate: step 4/4. In terms of biological role, catalyzes the decarboxylation of four acetate groups of uroporphyrinogen-III to yield coproporphyrinogen-III. The protein is Uroporphyrinogen decarboxylase of Mycolicibacterium gilvum (strain PYR-GCK) (Mycobacterium gilvum (strain PYR-GCK)).